The chain runs to 226 residues: N-(5'-phosphoribosyl)anthranilate isomerase (226 aa).

This sequence belongs to the TrpF family.

It carries out the reaction N-(5-phospho-beta-D-ribosyl)anthranilate = 1-(2-carboxyphenylamino)-1-deoxy-D-ribulose 5-phosphate. It participates in amino-acid biosynthesis; L-tryptophan biosynthesis; L-tryptophan from chorismate: step 3/5. This is N-(5'-phosphoribosyl)anthranilate isomerase (TRP1) from Candida albicans (strain SC5314 / ATCC MYA-2876) (Yeast).